A 31-amino-acid polypeptide reads, in one-letter code: U13-ctenitoxin-Pn1b (31 aa).

Cystine bridges form between C3-C17, C10-C21, and C16-C30.

In terms of tissue distribution, expressed by the venom gland.

Its subcellular location is the secreted. In terms of biological role, acts as a neurotoxin. This is U13-ctenitoxin-Pn1b from Phoneutria nigriventer (Brazilian armed spider).